The sequence spans 675 residues: DNA ligase (675 aa).

Residues 36–40, 85–86, and E118 contribute to the NAD(+) site; these read DAVYD and SL. K120 functions as the N6-AMP-lysine intermediate in the catalytic mechanism. Residues R141, E178, K298, and K322 each coordinate NAD(+). 4 residues coordinate Zn(2+): C416, C419, C434, and C439. One can recognise a BRCT domain in the interval 598-675; sequence TQPQTLSGKT…SEADLLALLQ (78 aa).

Belongs to the NAD-dependent DNA ligase family. LigA subfamily. Mg(2+) is required as a cofactor. Mn(2+) serves as cofactor.

It catalyses the reaction NAD(+) + (deoxyribonucleotide)n-3'-hydroxyl + 5'-phospho-(deoxyribonucleotide)m = (deoxyribonucleotide)n+m + AMP + beta-nicotinamide D-nucleotide.. Its function is as follows. DNA ligase that catalyzes the formation of phosphodiester linkages between 5'-phosphoryl and 3'-hydroxyl groups in double-stranded DNA using NAD as a coenzyme and as the energy source for the reaction. It is essential for DNA replication and repair of damaged DNA. The protein is DNA ligase of Acaryochloris marina (strain MBIC 11017).